The primary structure comprises 386 residues: S-adenosylmethionine synthase (386 aa).

H14 serves as a coordination point for ATP. Mg(2+) is bound at residue D16. E42 is a K(+) binding site. Positions 55 and 101 each coordinate L-methionine. The interval 101–111 (QSADIALGVDE) is flexible loop. Residues 166–168 (DGK), 233–234 (RF), D242, 248–249 (RK), A265, and K269 each bind ATP. An L-methionine-binding site is contributed by D242. K273 lines the L-methionine pocket.

It belongs to the AdoMet synthase family. As to quaternary structure, homotetramer; dimer of dimers. Mg(2+) serves as cofactor. K(+) is required as a cofactor.

It is found in the cytoplasm. The enzyme catalyses L-methionine + ATP + H2O = S-adenosyl-L-methionine + phosphate + diphosphate. It participates in amino-acid biosynthesis; S-adenosyl-L-methionine biosynthesis; S-adenosyl-L-methionine from L-methionine: step 1/1. Functionally, catalyzes the formation of S-adenosylmethionine (AdoMet) from methionine and ATP. The overall synthetic reaction is composed of two sequential steps, AdoMet formation and the subsequent tripolyphosphate hydrolysis which occurs prior to release of AdoMet from the enzyme. The polypeptide is S-adenosylmethionine synthase (Acholeplasma laidlawii (strain PG-8A)).